Consider the following 259-residue polypeptide: Small ribosomal subunit protein eS1 (259 aa).

The span at 1–18 (MAVGKNKRISKGKKGGKK) shows a compositional bias: basic residues. Residues 1 to 22 (MAVGKNKRISKGKKGGKKKASD) form a disordered region.

It belongs to the eukaryotic ribosomal protein eS1 family. In terms of assembly, component of the small ribosomal subunit. Mature ribosomes consist of a small (40S) and a large (60S) subunit. The 40S subunit contains about 33 different proteins and 1 molecule of RNA (18S). The 60S subunit contains about 49 different proteins and 3 molecules of RNA (25S, 5.8S and 5S).

The protein localises to the cytoplasm. The chain is Small ribosomal subunit protein eS1 from Chlamydomonas reinhardtii (Chlamydomonas smithii).